Here is a 92-residue protein sequence, read N- to C-terminus: C-C motif chemokine 22 (92 aa).

An N-terminal signal peptide occupies residues Met1–Ala24. Disulfide bonds link Cys36-Cys60 and Cys37-Cys76.

The protein belongs to the intercrine beta (chemokine CC) family. In terms of tissue distribution, expressed by activated splenic B-lymphocytes and dendritic cells. Low expression in lung, thymocytes, lymph node, and unstimulated splenic cells.

The protein localises to the secreted. Its function is as follows. Chemotactic for activated T-lymphocytes. May play an important role in the collaboration of dendritic cells and B-lymphocytes with T-cells in immune responses. This chain is C-C motif chemokine 22 (Ccl22), found in Mus musculus (Mouse).